We begin with the raw amino-acid sequence, 68 residues long: Large ribosomal subunit protein bL31 (68 aa).

Residues C16, C18, C36, and C39 each coordinate Zn(2+).

Belongs to the bacterial ribosomal protein bL31 family. Type A subfamily. In terms of assembly, part of the 50S ribosomal subunit. Zn(2+) serves as cofactor.

Functionally, binds the 23S rRNA. This chain is Large ribosomal subunit protein bL31, found in Lachnospira eligens (strain ATCC 27750 / DSM 3376 / VPI C15-48 / C15-B4) (Eubacterium eligens).